The primary structure comprises 511 residues: Mesoderm induction early response protein 1 (511 aa).

Positions 1–16 (MAEPSVESSSPGGSAT) are enriched in low complexity. The disordered stretch occupies residues 1–171 (MAEPSVESSS…EEESEEDEDY (171 aa)). At serine 10 the chain carries Phosphoserine. Positions 17–36 (SEDHEFDPSADMLVHDFDDE) are enriched in basic and acidic residues. Positions 37–46 (RTLEEEEMME) are enriched in acidic residues. Residues 57–66 (DLAREGDMPI) show a composition bias toward basic and acidic residues. The span at 83–104 (EEEEEEEEEEEGEDDEDADNDD) shows a compositional bias: acidic residues. Residues 128–143 (QSSNDDPSQSVTSQDA) show a composition bias toward polar residues. Serine 140 is subject to Phosphoserine. Residue tyrosine 154 is modified to Phosphotyrosine. Residues serine 159 and serine 165 each carry the phosphoserine modification. Residues 159 to 171 (SEIEEESEEDEDY) show a composition bias toward acidic residues. Residues 179-277 (KEIMVGSMFQ…EALRRLRFNV (99 aa)) enclose the ELM2 domain. Residue lysine 238 forms a Glycyl lysine isopeptide (Lys-Gly) (interchain with G-Cter in SUMO2) linkage. The SANT domain maps to 282–334 (EELSVWTEEECRNFEQGLKAYGKDFHLIQANKVRTRSVGECVAFYYMWKKSER). A disordered region spans residues 365–511 (ESESAASSRA…KFEEHENTND (147 aa)). A phosphoserine mark is found at serine 366, serine 368, and serine 376. A compositionally biased stretch (polar residues) spans 397 to 408 (SSRNQNGVSSNG). Composition is skewed to basic and acidic residues over residues 413 to 422 (LNKEEVKVEG) and 461 to 474 (ARNE…NERP). A Glycyl lysine isopeptide (Lys-Gly) (interchain with G-Cter in SUMO2) cross-link involves residue lysine 419. Residues 481-493 (NSSGKESPGSSEF) show a composition bias toward polar residues. Phosphoserine is present on residues serine 482, serine 487, and serine 490. Basic and acidic residues predominate over residues 499–511 (SHGKFEEHENTND).

In terms of assembly, interacts with HDAC1. Part of a complex containing at least CDYL, MIER1, MIER2, HDAC1 and HDAC2. In terms of tissue distribution, ubiquitously expressed. Isoform 1 is only expressed in testis.

Its subcellular location is the nucleus. Transcriptional repressor regulating the expression of a number of genes including SP1 target genes. Probably functions through recruitment of HDAC1 a histone deacetylase involved in chromatin silencing. The chain is Mesoderm induction early response protein 1 (Mier1) from Mus musculus (Mouse).